A 950-amino-acid polypeptide reads, in one-letter code: Protocadherin alpha-6 (950 aa).

The N-terminal stretch at 1 to 29 (MVFTPEDRLGKQCLLLPLLLLAAWKVGSG) is a signal peptide. Residues 30 to 697 (QLHYSVPEEA…GPEAALVDVN (668 aa)) lie on the Extracellular side of the membrane. Cadherin domains lie at 34–133 (SVPE…PPLF), 157–242 (ASDA…APNF), 243–350 (EQSE…VPEI), 351–455 (ALTS…APAF), 456–565 (AQPE…APAL), and 581–678 (VPRS…APKA). 4 N-linked (GlcNAc...) asparagine glycosylation sites follow: N257, N265, N386, and N548. Residues 698 to 718 (VYLIIAICAVSSLLVLTLLLY) form a helical membrane-spanning segment. Residues 719–950 (TALRCSAPST…GNSTTDNSDQ (232 aa)) lie on the Cytoplasmic side of the membrane. PXXP repeat units follow at residues 799–802 (PRQP), 832–835 (PGGP), 873–876 (PGNP), and 891–894 (PGSP). The 4 X 4 AA repeats of P-X-X-P stretch occupies residues 799–894 (PRQPNPDWRY…PDKFIIPGSP (96 aa)). The segment at 830 to 889 (AGPGGPDQQWPTVSSATPEPEAGEVSPPVGAGVNSNSWTFKYGPGNPKQSGPGELPDKFI) is disordered. Residues 901 to 950 (QEPANSQIDKSDFITFGKKEETKKKKKKKKGNKTQEKKEKGNSTTDNSDQ) form a disordered region. Positions 909–923 (DKSDFITFGKKEETK) are enriched in basic and acidic residues.

The protein localises to the cell membrane. Its function is as follows. Potential calcium-dependent cell-adhesion protein. May be involved in the establishment and maintenance of specific neuronal connections in the brain. In Pan troglodytes (Chimpanzee), this protein is Protocadherin alpha-6 (PCDHA6).